Here is a 150-residue protein sequence, read N- to C-terminus: Macrodomain Ter protein (150 aa).

Belongs to the MatP family. As to quaternary structure, homodimer.

The protein localises to the cytoplasm. Required for spatial organization of the terminus region of the chromosome (Ter macrodomain) during the cell cycle. Prevents early segregation of duplicated Ter macrodomains during cell division. Binds specifically to matS, which is a 13 bp signature motif repeated within the Ter macrodomain. The sequence is that of Macrodomain Ter protein from Shigella boydii serotype 18 (strain CDC 3083-94 / BS512).